We begin with the raw amino-acid sequence, 126 residues long: Aspartate 1-decarboxylase (126 aa).

S25 functions as the Schiff-base intermediate with substrate; via pyruvic acid in the catalytic mechanism. Residue S25 is modified to Pyruvic acid (Ser). T57 is a substrate binding site. The active-site Proton donor is Y58. Substrate is bound at residue 73-75 (GAA).

Belongs to the PanD family. In terms of assembly, heterooctamer of four alpha and four beta subunits. The cofactor is pyruvate. In terms of processing, is synthesized initially as an inactive proenzyme, which is activated by self-cleavage at a specific serine bond to produce a beta-subunit with a hydroxyl group at its C-terminus and an alpha-subunit with a pyruvoyl group at its N-terminus.

It localises to the cytoplasm. It carries out the reaction L-aspartate + H(+) = beta-alanine + CO2. The protein operates within cofactor biosynthesis; (R)-pantothenate biosynthesis; beta-alanine from L-aspartate: step 1/1. In terms of biological role, catalyzes the pyruvoyl-dependent decarboxylation of aspartate to produce beta-alanine. This Acetivibrio thermocellus (strain ATCC 27405 / DSM 1237 / JCM 9322 / NBRC 103400 / NCIMB 10682 / NRRL B-4536 / VPI 7372) (Clostridium thermocellum) protein is Aspartate 1-decarboxylase.